A 290-amino-acid polypeptide reads, in one-letter code: Homeobox protein HMX3-B (290 aa).

Disordered stretches follow at residues 1-41 (MADS…GSSK) and 96-169 (EKVN…KKKT). Residues 107–124 (LDRHTPDPPKSDQESKEE) show a composition bias toward basic and acidic residues. Residues 125–137 (SADDEIALEESDA) show a composition bias toward acidic residues. The segment covering 138–162 (EEPKKETDQEDDWMRKGEDLESDKK) has biased composition (basic and acidic residues). A DNA-binding region (homeobox) is located at residues 166-225 (KKKTRTVFSRSQVFQLESTFDIKRYLSSSERAGLAASLHLTETQVKIWFQNRRNKWKRQL).

Belongs to the HMX homeobox family. As to expression, expressed in the ear placode and vesicle and in cells forming the vestibulo-acoustic ganglion.

It is found in the nucleus. Its function is as follows. Transcription factor involved in specification of neuronal cell types and which is required for inner ear and hypothalamus development. Binds to the 5'-CAAGTG-3' core sequence. This chain is Homeobox protein HMX3-B (hmx3b), found in Oryzias latipes (Japanese rice fish).